The sequence spans 23 residues: Cysteine proteinase (23 aa).

Basic and acidic residues predominate over residues 1 to 10; the sequence is ADSLDWREKG. The disordered stretch occupies residues 1–23; the sequence is ADSLDWREKGVVNSIKDQAQXGS.

This sequence belongs to the peptidase C1 family.

The chain is Cysteine proteinase from Tritrichomonas foetus (Trichomonas foetus).